Reading from the N-terminus, the 181-residue chain is Large ribosomal subunit protein uL5 (181 aa).

The protein belongs to the universal ribosomal protein uL5 family. As to quaternary structure, part of the 50S ribosomal subunit; contacts the 5S rRNA and probably tRNA. Forms a bridge to the 30S subunit in the 70S ribosome.

This is one of the proteins that bind and probably mediate the attachment of the 5S RNA into the large ribosomal subunit, where it forms part of the central protuberance. In the 70S ribosome it contacts protein S13 of the 30S subunit (bridge B1b), connecting the 2 subunits; this bridge is implicated in subunit movement. May contact the P site tRNA; the 5S rRNA and some of its associated proteins might help stabilize positioning of ribosome-bound tRNAs. This chain is Large ribosomal subunit protein uL5, found in Methanococcus maripaludis (strain DSM 14266 / JCM 13030 / NBRC 101832 / S2 / LL).